The chain runs to 440 residues: MGTKLSSRSPFSLPFLTLLAGMAIAQQPAHSGVETIDHIVAVVNENVITRHELDEMLGAMLKQLQKQGVQPPPPAVLEKQLLERIILNRVQLQLANETGLTVSDAELDQTLRRIAQENKMSLQEFDRALAEDGVSFSKFRDEIRDEIILVRLKEREVSNRVSVTEGEVDHFLETQEDSPSQSDEYRIAHILIQVSEGADPLKRDAARQRAESALAKLKAGTEFAQVAAEFSDAPDAMEGGLLNWRPAAQLTKKFAEILTPMKPGEITGIIPSPNGFHILKLVERRNQDTVTTMIDQTHARHILIKISELTSEADAHRRVTELKERLDNGSKFEELAKLHSEDASAPTGGDLGWISPGDTVPEFEQAMSALKPGEISSPVQSPFGWHLIQVIERRTQDVSQERKRQSARQAIRARKAETAFQEWLQRLRDRAYVEYRLEEG.

Positions Met1–Ala25 are cleaved as a signal peptide. PpiC domains follow at residues Ser182 to Glu283 and Ile294 to Glu392.

It localises to the periplasm. It catalyses the reaction [protein]-peptidylproline (omega=180) = [protein]-peptidylproline (omega=0). Chaperone involved in the correct folding and assembly of outer membrane proteins. Recognizes specific patterns of aromatic residues and the orientation of their side chains, which are found more frequently in integral outer membrane proteins. May act in both early periplasmic and late outer membrane-associated steps of protein maturation. The polypeptide is Chaperone SurA (Nitrosospira multiformis (strain ATCC 25196 / NCIMB 11849 / C 71)).